The sequence spans 673 residues: Capsid protein (673 aa).

The tract at residues 575–595 (NLPTDSSLESDSDSEPAPKKK) is disordered.

The protein belongs to the anelloviridae capsid protein family.

Its subcellular location is the virion. Functionally, self-assembles to form an icosahedral capsid with a T=1 symmetry, about 30 nm in diameter, and consisting of 60 capsid proteins. The capsid encapsulates the genomic DNA. Capsid protein is involved in attachment and entry into the host cell. This is Capsid protein from Homo sapiens (Human).